The following is a 359-amino-acid chain: E2F transcription factor-like E2FD (359 aa).

2 DNA-binding regions span residues 13–78 (RKDK…SWKG) and 138–217 (RKER…RWLG). Disordered stretches follow at residues 255 to 274 (RNKS…QNTS) and 288 to 313 (DVKN…NNIR). A compositionally biased stretch (polar residues) spans 293-309 (ASGSSTPAGTSESNDMG).

The protein belongs to the E2F/DP family. In terms of assembly, monomer. No interactions with DPA or E2FA. Preferentially expressed in proliferating tissues. Highly expressed in young stalk and young flowers. Lower expression in young leaves and mature flowers. Detected in cotyledonary vascular tissues, the shoot apical meristem, the base of trichomes, the fully developed stomata, the central root cylinder and in the columella of lateral roots but not in the primary root tips or in the leaf epidermal cells.

It is found in the nucleus. Inhibitor of E2F-dependent regulation of gene expression. Binds specifically the E2 recognition site as a monomer without interacting with DP proteins. May be up-regulating E2FA and down-regulating repressors of cell cycle progression. Promotes cell proliferation and represses cell elongation. Regulated by proteolysis via a ubiquitin-proteasome pathway. In Arabidopsis thaliana (Mouse-ear cress), this protein is E2F transcription factor-like E2FD (E2FD).